The sequence spans 397 residues: 3-ketoacyl-CoA thiolase, mitochondrial (397 aa).

A mitochondrion; not cleaved-targeting transit peptide spans 1–16 (MALLRGVFIVAAKRTP). Residue K25 is modified to N6-acetyllysine; alternate. N6-succinyllysine; alternate is present on K25. K45 is subject to N6-succinyllysine. Catalysis depends on C92, which acts as the Acyl-thioester intermediate. Residue T119 is modified to Phosphothreonine. Residue S121 is modified to Phosphoserine. Y127 carries the phosphotyrosine modification. Position 136 is a phosphothreonine (T136). N6-acetyllysine; alternate occurs at positions 137, 143, 158, 171, 191, and 209. N6-succinyllysine; alternate is present on residues K137, K143, K158, K171, K191, and K209. K211, K212, and K214 each carry N6-succinyllysine. CoA-binding residues include R224 and T227. Residue K240 is modified to N6-succinyllysine. Position 241 is an N6-acetyllysine (K241). Residue S251 coordinates CoA. An N6-acetyllysine mark is found at K269 and K270. Residue K305 is modified to N6-acetyllysine; alternate. The residue at position 305 (K305) is an N6-succinyllysine; alternate. S310 is subject to Phosphoserine. K312 bears the N6-acetyllysine; alternate mark. K312 carries the post-translational modification N6-succinyllysine; alternate. At S333 the chain carries Phosphoserine. Residue K340 is modified to N6-acetyllysine. Residue S344 is modified to Phosphoserine. Position 375 is an N6-acetyllysine (K375). The active-site Proton donor/acceptor is the C382.

It belongs to the thiolase-like superfamily. Thiolase family. Homotetramer. Interacts with BNIP3. As to expression, expressed in liver, brown adipose tissue and heart (at protein level).

The protein resides in the mitochondrion. The catalysed reaction is an acyl-CoA + acetyl-CoA = a 3-oxoacyl-CoA + CoA. It catalyses the reaction 2 acetyl-CoA = acetoacetyl-CoA + CoA. The enzyme catalyses acetyl-CoA + H2O = acetate + CoA + H(+). It carries out the reaction propanoyl-CoA + H2O = propanoate + CoA + H(+). The catalysed reaction is butanoyl-CoA + H2O = butanoate + CoA + H(+). It catalyses the reaction hexanoyl-CoA + H2O = hexanoate + CoA + H(+). The enzyme catalyses octanoyl-CoA + H2O = octanoate + CoA + H(+). It carries out the reaction decanoyl-CoA + H2O = decanoate + CoA + H(+). The catalysed reaction is dodecanoyl-CoA + H2O = dodecanoate + CoA + H(+). It catalyses the reaction tetradecanoyl-CoA + H2O = tetradecanoate + CoA + H(+). The enzyme catalyses hexadecanoyl-CoA + H2O = hexadecanoate + CoA + H(+). Its pathway is lipid metabolism; fatty acid beta-oxidation. The 3-oxoacetyl-CoA thiolase activity is inhibited by acetyl-CoA while the acetyl-CoA hydrolase activity is inhibited by acetoacetyl-CoA. In the production of energy from fats, this is one of the enzymes that catalyzes the last step of the mitochondrial beta-oxidation pathway, an aerobic process breaking down fatty acids into acetyl-CoA. Using free coenzyme A/CoA, catalyzes the thiolytic cleavage of medium- to long-chain unbranched 3-oxoacyl-CoAs into acetyl-CoA and a fatty acyl-CoA shortened by two carbon atoms. Also catalyzes the condensation of two acetyl-CoA molecules into acetoacetyl-CoA and could be involved in the production of ketone bodies. Also displays hydrolase activity on various fatty acyl-CoAs. Thereby, could be responsible for the production of acetate in a side reaction to beta-oxidation. Abolishes BNIP3-mediated apoptosis and mitochondrial damage. This is 3-ketoacyl-CoA thiolase, mitochondrial (Acaa2) from Rattus norvegicus (Rat).